The chain runs to 457 residues: TnpB-like protein ORF457 (457 aa).

Positions 1–22 are disordered; it reads MPPSSGQLLGDEEREPTSTPAI.

It in the N-terminal section; belongs to the transposase 2 family. The protein in the C-terminal section; belongs to the transposase 35 family.

The protein is TnpB-like protein ORF457 of Acidianus two-tailed virus (ATV).